The following is a 292-amino-acid chain: MATVVTIRQLLESGVHFGHQTRRWNPKMKRFIFTERNGIYIIDLQKSLSYIDRAYEFVKETVAHGGTILFVGTKKQAQEAIYEQARRVGMPYVNQRWLGGMLTNFSTVHKRLQRLKELEEIDFDDVASSGLTKKELLGLRREKEKLERTLGGIRDMNRVPSAVWIVDTKKEHIAISEARKLNIPVVAILDTNCDPDEVDYPIPGNDDAIRSVSLLTRVVADAVAEGLMIRSGGAPGSEKGAGEPLAEWERELLEGKTEAAGEEATPAAEAPAKEEKAQAPEEKKEAGSGEEA.

Positions 230–292 (RSGGAPGSEK…KKEAGSGEEA (63 aa)) are disordered. Composition is skewed to basic and acidic residues over residues 247–259 (EWERELLEGKTEA) and 271–292 (PAKEEKAQAPEEKKEAGSGEEA).

It belongs to the universal ribosomal protein uS2 family.

In Thermobifida fusca (strain YX), this protein is Small ribosomal subunit protein uS2.